The primary structure comprises 99 residues: Small ribosomal subunit protein eS24 (99 aa).

It belongs to the eukaryotic ribosomal protein eS24 family.

This Methanothrix thermoacetophila (strain DSM 6194 / JCM 14653 / NBRC 101360 / PT) (Methanosaeta thermophila) protein is Small ribosomal subunit protein eS24.